Reading from the N-terminus, the 412-residue chain is Putative pectate lyase 11 (412 aa).

Residues 1–24 (MVSYSNNHFAYAFLLLLTIGNTLA) form the signal peptide. Asp210, Asp234, and Asp238 together coordinate Ca(2+). Arg290 is a catalytic residue.

Belongs to the polysaccharide lyase 1 family. Requires Ca(2+) as cofactor.

It carries out the reaction Eliminative cleavage of (1-&gt;4)-alpha-D-galacturonan to give oligosaccharides with 4-deoxy-alpha-D-galact-4-enuronosyl groups at their non-reducing ends.. Its pathway is glycan metabolism; pectin degradation; 2-dehydro-3-deoxy-D-gluconate from pectin: step 2/5. This chain is Putative pectate lyase 11, found in Arabidopsis thaliana (Mouse-ear cress).